Reading from the N-terminus, the 411-residue chain is Probable indole-3-pyruvate monooxygenase YUCCA4 (411 aa).

Position 21–26 (21–26 (GAGPSG)) interacts with FAD. Residue 183–188 (GCGNSG) coordinates NADP(+).

It belongs to the FMO family. It depends on FAD as a cofactor. As to expression, expressed in leaves, stems, flowers, buds and siliques. Detected in the apical gynoecium and in the developing ovules.

It localises to the cytoplasm. Its subcellular location is the endoplasmic reticulum membrane. The catalysed reaction is indole-3-pyruvate + NADPH + O2 + H(+) = (indol-3-yl)acetate + CO2 + NADP(+) + H2O. It functions in the pathway plant hormone metabolism; auxin biosynthesis. Functionally, involved in auxin biosynthesis. Both isoforms are catalitically active. Involved during embryogenesis and seedling development. Required for the formation of floral organs and vascular tissues. Belongs to the set of redundant YUCCA genes probably responsible for auxin biosynthesis in shoots. The polypeptide is Probable indole-3-pyruvate monooxygenase YUCCA4 (YUC4) (Arabidopsis thaliana (Mouse-ear cress)).